The following is a 272-amino-acid chain: Dermonecrotic toxin SpeSicTox-betaIB1a (272 aa).

Histidine 5 is an active-site residue. 2 residues coordinate Mg(2+): glutamate 25 and aspartate 27. Histidine 41 (nucleophile) is an active-site residue. Cystine bridges form between cysteine 45–cysteine 51 and cysteine 47–cysteine 191. Position 85 (aspartate 85) interacts with Mg(2+).

This sequence belongs to the arthropod phospholipase D family. Class II subfamily. Requires Mg(2+) as cofactor. As to expression, expressed by the venom gland.

It localises to the secreted. It catalyses the reaction an N-(acyl)-sphingosylphosphocholine = an N-(acyl)-sphingosyl-1,3-cyclic phosphate + choline. It carries out the reaction an N-(acyl)-sphingosylphosphoethanolamine = an N-(acyl)-sphingosyl-1,3-cyclic phosphate + ethanolamine. The catalysed reaction is a 1-acyl-sn-glycero-3-phosphocholine = a 1-acyl-sn-glycero-2,3-cyclic phosphate + choline. The enzyme catalyses a 1-acyl-sn-glycero-3-phosphoethanolamine = a 1-acyl-sn-glycero-2,3-cyclic phosphate + ethanolamine. Functionally, dermonecrotic toxins cleave the phosphodiester linkage between the phosphate and headgroup of certain phospholipids (sphingolipid and lysolipid substrates), forming an alcohol (often choline) and a cyclic phosphate. This toxin acts on sphingomyelin (SM). It may also act on ceramide phosphoethanolamine (CPE), lysophosphatidylcholine (LPC) and lysophosphatidylethanolamine (LPE), but not on lysophosphatidylserine (LPS), and lysophosphatidylglycerol (LPG). It acts by transphosphatidylation, releasing exclusively cyclic phosphate products as second products. Induces dermonecrosis, hemolysis, increased vascular permeability, edema, inflammatory response, and platelet aggregation. This is Dermonecrotic toxin SpeSicTox-betaIB1a from Sicarius peruensis (Six-eyed sand spider).